The sequence spans 1006 residues: Unconventional myosin-Id (1006 aa).

At Ala-2 the chain carries N-acetylalanine. The 687-residue stretch at 9-695 folds into the Myosin motor domain; that stretch reads FGKADFVLMD…TLFTLEELRA (687 aa). Residue 102–109 participates in ATP binding; that stretch reads GESGAGKT. Residue Ser-200 is modified to Phosphoserine. A Phosphotyrosine modification is found at Tyr-536. The tract at residues 572 to 594 is actin-binding; it reads MIALVDNLASKEPYYVRCIKPND. IQ domains lie at 699–719 and 721–741; these read VRVV…MRYK and TKAA…SYIH. Residues 776 to 896 form an interaction with calmodulin region; it reads LQSIFNRWRA…MDPTKQYKVM (121 aa). Residues 812–1005 form the TH1 domain; sequence GQRADLGLQR…RSGFILSVPG (194 aa).

This sequence belongs to the TRAFAC class myosin-kinesin ATPase superfamily. Myosin family. Interacts (via the two IQ motifs) with calmodulin. Binds an additional calmodulin chain via a third, C-terminal region. Interacts with F-actin. In terms of tissue distribution, detected on tracheal epithelial cells, and on epithelial cells and brush border cells in duodenum, jejunum and ileum. Detected on myelinated white matter in the cerebellum, and the myelinated part of the optic nerve. Detected on mature oligodendrocites. Detected on the outside of the myelin sheet that surrounds axons (at protein level). Ubiquitous. Highest levels in adult brain, and spinal cord. Moderate levels in lung, kidney, liver and spleen. Low levels in testis and heart (at protein level).

The protein localises to the cytoplasm. It is found in the perikaryon. It localises to the cell projection. Its subcellular location is the dendrite. The protein resides in the early endosome. The protein localises to the cell cortex. In terms of biological role, unconventional myosin that functions as actin-based motor protein with ATPase activity. Plays a role in endosomal protein trafficking, and especially in the transfer of cargo proteins from early to recycling endosomes. Required for normal planar cell polarity in ciliated tracheal cells, for normal rotational polarity of cilia, and for coordinated, unidirectional ciliary movement in the trachea. Required for normal, polarized cilia organization in brain ependymal epithelial cells. This is Unconventional myosin-Id (Myo1d) from Rattus norvegicus (Rat).